The following is a 75-amino-acid chain: Probable [Fe-S]-dependent transcriptional repressor (75 aa).

Residues Cys55, Cys60, Cys63, and Cys72 each coordinate iron-sulfur cluster.

The protein belongs to the FeoC family.

In terms of biological role, may function as a transcriptional regulator that controls feoABC expression. This chain is Probable [Fe-S]-dependent transcriptional repressor, found in Serratia marcescens.